The primary structure comprises 299 residues: Plasmodesmata-located protein 5 (299 aa).

The signal sequence occupies residues 1 to 25 (MIKTKTTSLLCFLLTAVILMNPSSS). Topologically, residues 26 to 264 (SPTDNYIYAV…NKDDNGVGKT (239 aa)) are extracellular. 2 Gnk2-homologous domains span residues 29-135 (DNYI…NKSF) and 137-237 (GVQD…VGGS). Disulfide bonds link Cys-36/Cys-113, Cys-89/Cys-98, Cys-101/Cys-126, Cys-148/Cys-215, Cys-191/Cys-200, and Cys-203/Cys-228. The chain crosses the membrane as a helical span at residues 265–285 (LAIIIGIVTLIILLVVFLAFV). The necessary and sufficient for plasmodesmal targeting stretch occupies residues 265–285 (LAIIIGIVTLIILLVVFLAFV). Topologically, residues 286–299 (GKCCRKLQDEKWCK) are cytoplasmic.

It belongs to the cysteine-rich repeat secretory protein family. Plasmodesmata-located proteins (PDLD) subfamily. As to quaternary structure, monomer. Interacts with PDLP1. In terms of assembly, (Microbial infection) Interacts with Grapevine fanleaf virus (GFLV) 2B-MP. Highly expressed in inflorescence nodes and rosette senescent leaves. Mostly expressed in cell wall junctions between leaf epidermal and mesophyl cells, and to a lesser extent at the cross walls between epidermal or cortex cells within the hypocotyl (at protein level). Low vascular expression in seedling and mature leaf, but high expression in senescing leaves (at protein level).

It is found in the cell membrane. The protein resides in the cell junction. It localises to the plasmodesma. Its function is as follows. Modulates cell-to-cell trafficking. Has a positive role in innate immunity. Required for systemic acquired resistance (SAR) which is mediated by the signaling molecules azelaic acid (AzA), glycerol-3-phosphate (G3P), and salicylic acid (SA). Negative regulator of plasmodesmata permeability triggered by SA during immune responses, through regulation of callose deposition. Delays the trafficking of Tobacco Mosaic Virus (TMV) movement protein (MP). Required for symplastic signal transport. This is Plasmodesmata-located protein 5 from Arabidopsis thaliana (Mouse-ear cress).